The chain runs to 792 residues: MQQESERCRVRARRPDMALYVPKARRGAVLLKTGDEEESCGSPNSVVKEKQKESSLSQKEVFKDKPEARRLNINPDRKEHNCREEKKSSTKLRMDTCLQKTNRVCSKRGTTESKEVLSQGQQQGAPNAGVITNAPLQRHFKPKKVECLEVETTDVTGHERILLSQACLEISEAQVPSKPFQNVEFCDFSRHEPDGEAFEDKDLEGRIETDTKVLEILYEFPRVFSSVMKPENMIVPIKLSSDSEIVQQSMQTSDGILNPSSGGITTTSVPGSPDGVFDQTCVDFEVESVGGIANSTGFILDQKDTDSIPATMGHISLSESTNDTVSPVMIRECEKNDSTADELHVKHEPPDTAVLAHETHRDSGFKNVGDITNKACMMDTTGMSCSDHVTVDSPYVVAVRIADETSINTRSFSKFVGMSADATPLHVARSGNDTEDFSNPSACSDIYGESISSHFTESTGKLIESLSDCASSLPIKKIAGSNYNTFLDSELSMLNGTKVLSDSAVGIDLGSTGDTTEALHELRTAEEFKTEEQDDSGSIEFGVSFPDRESSSMETSIEPKATETSHTEGITAIEESWESMFNDDGDCLDPRLLQEGILMHIKPENHCSKLSGNTKSRESIQEPRSDYYNHEVPDIDLSDCEFPHVIEIYDFPQEFHTEDLLRVFCSYQKKGFDIKWVDDTHALGVFSSPITARDALGIKHTMVKIRPLSQATRAAKAKARAYAEFLQPAKERPETSAALARRLVISALGVRSKQSKTEREAELKKLQEARERKRLEAKQREDIWEGRDQSTV.

The EJC-binding motif; may mediate interaction with the EJC stretch occupies residues 7–27 (RCRVRARRPDMALYVPKARRG). 2 disordered regions span residues 32–61 (KTGD…QKEV) and 527–567 (EFKT…TSHT). Ser688 carries the phosphoserine modification. Position 712 is a phosphothreonine (Thr712). Residues 751 to 783 (RSKQSKTEREAELKKLQEARERKRLEAKQREDI) adopt a coiled-coil conformation. Positions 772–792 (RKRLEAKQREDIWEGRDQSTV) are disordered.

May interact with the exon junction complex (EJC) composed at least of CASC3, EIF4A3, MAGOH and RBM8A. Expressed in placenta.

The polypeptide is Coiled-coil domain-containing protein R3HCC1L (R3HCC1L) (Homo sapiens (Human)).